A 187-amino-acid polypeptide reads, in one-letter code: MILLIDNYDSFTWNLYQYFCELGAEVLVRRNDELTLADIISLAPAKIVISPGPCTPDESGISLAAIRHFSGQTPILGVCLGHQAIAQVFGAAIVRAAKVMHGKTSPVSHTGQGVFLGLNNPLTVTRYHSLLIDPRTLPECFEVTARSEEGEIMGIRHRVFDLEGVQFHPESILSEQGHQLLANFLNR.

The Glutamine amidotransferase type-1 domain maps to 1-187; it reads MILLIDNYDS…HQLLANFLNR (187 aa). Residues C79, H168, and E170 contribute to the active site.

As to quaternary structure, monomer. Heterodimer consisting of two non-identical subunits: a glutamine amidotransferase subunit (PabA) and a aminodeoxychorismate synthase subunit (PabB).

The enzyme catalyses chorismate + L-glutamine = 4-amino-4-deoxychorismate + L-glutamate. It functions in the pathway cofactor biosynthesis; tetrahydrofolate biosynthesis; 4-aminobenzoate from chorismate: step 1/2. Part of a heterodimeric complex that catalyzes the two-step biosynthesis of 4-amino-4-deoxychorismate (ADC), a precursor of p-aminobenzoate (PABA) and tetrahydrofolate. In the first step, a glutamine amidotransferase (PabA) generates ammonia as a substrate that, along with chorismate, is used in the second step, catalyzed by aminodeoxychorismate synthase (PabB) to produce ADC. PabA converts glutamine into glutamate only in the presence of stoichiometric amounts of PabB. This Klebsiella aerogenes (Enterobacter aerogenes) protein is Aminodeoxychorismate synthase component 2 (pabA).